The chain runs to 935 residues: C-1-tetrahydrofolate synthase, cytoplasmic (935 aa).

The residue at position 1 (methionine 1) is an N-acetylmethionine. The tract at residues 2–291 (APAEILNGKE…MLMQSTVESA (290 aa)) is methylenetetrahydrofolate dehydrogenase and methenyltetrahydrofolate cyclohydrolase (D/C) domain. Residues 52–56 (YINVK) and 99–101 (VQL) contribute to the substrate site. Lysine 56 is an active-site residue. NADP(+)-binding positions include 172–174 (GRS) and serine 197. 272–276 (PGGVG) serves as a coordination point for substrate. Residues 310–935 (LNLKTPVPSD…PETEQVNGLF (626 aa)) form a formyltetrahydrofolate synthetase domain region. At serine 318 the chain carries Phosphoserine. Position 380-387 (380-387 (TPLGEGKS)) interacts with ATP. A phosphoserine mark is found at serine 413 and serine 490.

In the N-terminal section; belongs to the tetrahydrofolate dehydrogenase/cyclohydrolase family. The protein in the C-terminal section; belongs to the formate--tetrahydrofolate ligase family. Homodimer. In terms of tissue distribution, ubiquitous.

It localises to the cytoplasm. It carries out the reaction (6R)-5,10-methylene-5,6,7,8-tetrahydrofolate + NADP(+) = (6R)-5,10-methenyltetrahydrofolate + NADPH. The catalysed reaction is (6R)-5,10-methenyltetrahydrofolate + H2O = (6R)-10-formyltetrahydrofolate + H(+). The enzyme catalyses (6S)-5,6,7,8-tetrahydrofolate + formate + ATP = (6R)-10-formyltetrahydrofolate + ADP + phosphate. The protein operates within one-carbon metabolism; tetrahydrofolate interconversion. Functionally, trifunctional enzyme that catalyzes the interconversion of three forms of one-carbon-substituted tetrahydrofolate: (6R)-5,10-methylene-5,6,7,8-tetrahydrofolate, 5,10-methenyltetrahydrofolate and (6S)-10-formyltetrahydrofolate. These derivatives of tetrahydrofolate are differentially required in nucleotide and amino acid biosynthesis, (6S)-10-formyltetrahydrofolate being required for purine biosynthesis while (6R)-5,10-methylene-5,6,7,8-tetrahydrofolate is used for serine and methionine biosynthesis for instance. The sequence is that of C-1-tetrahydrofolate synthase, cytoplasmic (MTHFD1) from Homo sapiens (Human).